The primary structure comprises 268 residues: Orotidine 5'-phosphate decarboxylase (268 aa).

Substrate is bound by residues Asp-39, 61-63 (KTH), 93-102 (DRKFADIGNT), Tyr-219, and Arg-237. The active-site Proton donor is Lys-95.

This sequence belongs to the OMP decarboxylase family.

It carries out the reaction orotidine 5'-phosphate + H(+) = UMP + CO2. The protein operates within pyrimidine metabolism; UMP biosynthesis via de novo pathway; UMP from orotate: step 2/2. The polypeptide is Orotidine 5'-phosphate decarboxylase (URA3) (Pachysolen tannophilus (Yeast)).